We begin with the raw amino-acid sequence, 382 residues long: tRNA-queuosine alpha-mannosyltransferase (382 aa).

It belongs to the glycosyltransferase group 1 family. Glycosyltransferase 4 subfamily.

The protein resides in the cytoplasm. It localises to the nucleus. The enzyme catalyses queuosine(34) in tRNA(Asp) + GDP-alpha-D-mannose = O-4''-alpha-D-mannosylqueuosine(34) in tRNA(Asp) + GDP + H(+). Functionally, glycosyltransferase that specifically catalyzes mannosylation of cytoplasmic tRNA(Asp) modified with queuosine at position 34 (queuosine(34)). Mannosylates the cyclopentene moiety of queuosine(34) in tRNA(Asp) to form mannosyl-queuosine(34). Mannosylation of queuosine(34) in tRNA(Asp) is required to slow-down elongation at cognate codons, GAC and GAU, thereby regulating protein translation. This is tRNA-queuosine alpha-mannosyltransferase (GTDC1) from Gallus gallus (Chicken).